Consider the following 164-residue polypeptide: UPF0303 protein RHECIAT_CH0003058 (164 aa).

Belongs to the UPF0303 family.

The sequence is that of UPF0303 protein RHECIAT_CH0003058 from Rhizobium etli (strain CIAT 652).